Reading from the N-terminus, the 387-residue chain is 1-deoxy-D-xylulose 5-phosphate reductoisomerase (387 aa).

T10, G11, S12, I13, and N124 together coordinate NADPH. Residue K125 coordinates 1-deoxy-D-xylulose 5-phosphate. Position 126 (E126) interacts with NADPH. D150 serves as a coordination point for Mn(2+). Positions 151, 152, 176, and 199 each coordinate 1-deoxy-D-xylulose 5-phosphate. E152 contacts Mn(2+). G205 contributes to the NADPH binding site. The 1-deoxy-D-xylulose 5-phosphate site is built by S212, N217, K218, and E221. E221 lines the Mn(2+) pocket.

The protein belongs to the DXR family. The cofactor is Mg(2+). It depends on Mn(2+) as a cofactor.

The enzyme catalyses 2-C-methyl-D-erythritol 4-phosphate + NADP(+) = 1-deoxy-D-xylulose 5-phosphate + NADPH + H(+). It functions in the pathway isoprenoid biosynthesis; isopentenyl diphosphate biosynthesis via DXP pathway; isopentenyl diphosphate from 1-deoxy-D-xylulose 5-phosphate: step 1/6. Catalyzes the NADPH-dependent rearrangement and reduction of 1-deoxy-D-xylulose-5-phosphate (DXP) to 2-C-methyl-D-erythritol 4-phosphate (MEP). The chain is 1-deoxy-D-xylulose 5-phosphate reductoisomerase from Clostridium beijerinckii (strain ATCC 51743 / NCIMB 8052) (Clostridium acetobutylicum).